Reading from the N-terminus, the 491-residue chain is MTSLSKSFMQSGRICAACFYLLFTLLSIPISFKVGGLECGLSFTVTLFTLYFITTTLNVLARRHGGRLYIFFTNCLYYSQHFIIASLLYLFLSGFSNDELGNVLKNKYNESESFLEALKNSLNSNQINYVLYYYYYRFVVQPWQFVLTKSTPFFTLSEGFFTILAIQAVGETNRWLSNDLNSNTWIISSLLTSGGVITASLYYLYRIYVTPIWPLSIQTASLLGLVLSMVCGLGLYGIVSQKGSVIESSLFFAYIVRCIYEISPKLATTATDEILNLFKDVWQKHQRNLPTADNLLCYFHNVILKNAEVLWGSFIPRGRKKTGDFHDKLISILSFEKVSLISKPFWKFFKNFTFSVPLSINEFCQVTIKMASESVSPAIVINLCFRVLMFYSATRIIPALQRKNDKQLRKSRRIMKGLYWYSPCILIAMYTHLILQYSGELKKDLCIWGCSEKWFGVDQPEIIVDSWGFWNWCNIFCTILVYATELIGSGS.

Residues 1–13 (MTSLSKSFMQSGR) lie on the Cytoplasmic side of the membrane. The chain crosses the membrane as a helical span at residues 14–34 (ICAACFYLLFTLLSIPISFKV). At 35 to 40 (GGLECG) the chain is on the lumenal side. The chain crosses the membrane as a helical span at residues 41 to 61 (LSFTVTLFTLYFITTTLNVLA). Residues 62 to 74 (RRHGGRLYIFFTN) are Cytoplasmic-facing. The chain crosses the membrane as a helical span at residues 75–95 (CLYYSQHFIIASLLYLFLSGF). The Lumenal portion of the chain corresponds to 96–149 (SNDELGNVLKNKYNESESFLEALKNSLNSNQINYVLYYYYYRFVVQPWQFVLTK). Residues 150 to 170 (STPFFTLSEGFFTILAIQAVG) form a helical membrane-spanning segment. Residues 171-184 (ETNRWLSNDLNSNT) are Cytoplasmic-facing. Residues 185–205 (WIISSLLTSGGVITASLYYLY) form a helical membrane-spanning segment. The Lumenal portion of the chain corresponds to 206–218 (RIYVTPIWPLSIQ). Residues 219-239 (TASLLGLVLSMVCGLGLYGIV) traverse the membrane as a helical segment. Residues 240 to 294 (SQKGSVIESSLFFAYIVRCIYEISPKLATTATDEILNLFKDVWQKHQRNLPTADN) are Cytoplasmic-facing. A helical membrane pass occupies residues 295–315 (LLCYFHNVILKNAEVLWGSFI). The Lumenal portion of the chain corresponds to 316–373 (PRGRKKTGDFHDKLISILSFEKVSLISKPFWKFFKNFTFSVPLSINEFCQVTIKMASE). A helical membrane pass occupies residues 374 to 394 (SVSPAIVINLCFRVLMFYSAT). At 395–413 (RIIPALQRKNDKQLRKSRR) the chain is on the cytoplasmic side. Residues 414–434 (IMKGLYWYSPCILIAMYTHLI) traverse the membrane as a helical segment. The Lumenal portion of the chain corresponds to 435 to 461 (LQYSGELKKDLCIWGCSEKWFGVDQPE). The chain crosses the membrane as a helical span at residues 462–482 (IIVDSWGFWNWCNIFCTILVY). Residues 483 to 491 (ATELIGSGS) are Cytoplasmic-facing.

It localises to the endoplasmic reticulum membrane. This Saccharomyces cerevisiae (strain ATCC 204508 / S288c) (Baker's yeast) protein is Protein ICE2 (ICE2).